We begin with the raw amino-acid sequence, 85 residues long: Large ribosomal subunit protein bL27 (85 aa).

Residues 1–21 are disordered; sequence MAHKKAGGSTRNGRDSEGKRL.

Belongs to the bacterial ribosomal protein bL27 family.

The chain is Large ribosomal subunit protein bL27 from Hamiltonella defensa subsp. Acyrthosiphon pisum (strain 5AT).